The following is a 181-amino-acid chain: uncharacterized protein (181 aa).

This is an uncharacterized protein from Acanthamoeba polyphaga (Amoeba).